The following is a 434-amino-acid chain: Cobyrinate a,c-diamide synthase (434 aa).

Positions 239–430 (KMAIAYDPAF…SHLHFSNFQL (192 aa)) constitute a GATase cobBQ-type domain. Cysteine 320 serves as the catalytic Nucleophile.

The protein belongs to the CobB/CbiA family. Requires Mg(2+) as cofactor.

The enzyme catalyses cob(II)yrinate + 2 L-glutamine + 2 ATP + 2 H2O = cob(II)yrinate a,c diamide + 2 L-glutamate + 2 ADP + 2 phosphate + 2 H(+). Its pathway is cofactor biosynthesis; adenosylcobalamin biosynthesis; cob(II)yrinate a,c-diamide from sirohydrochlorin (anaerobic route): step 10/10. In terms of biological role, catalyzes the ATP-dependent amidation of the two carboxylate groups at positions a and c of cobyrinate, using either L-glutamine or ammonia as the nitrogen source. The sequence is that of Cobyrinate a,c-diamide synthase from Saccharolobus solfataricus (strain ATCC 35092 / DSM 1617 / JCM 11322 / P2) (Sulfolobus solfataricus).